Reading from the N-terminus, the 412-residue chain is Protein arginine N-methyltransferase 2 (412 aa).

One can recognise an RMT2 domain in the interval 190–412 (TAADPDTYLN…YYYHPKISFA (223 aa)). Residues Tyr-197, Met-227, 250-255 (FGMGII), 271-273 (EAH), 298-299 (WQ), and Asp-319 each bind S-adenosyl-L-methionine.

It belongs to the class I-like SAM-binding methyltransferase superfamily. RMT2 methyltransferase family. As to quaternary structure, monomer.

The protein resides in the cytoplasm. Its subcellular location is the nucleus. In terms of biological role, S-adenosyl-L-methionine-dependent protein-arginine N-methyltransferase that methylates the delta-nitrogen atom of arginine residues to form N5-methylarginine (type IV) in target proteins. Monomethylates ribosomal protein L12. The sequence is that of Protein arginine N-methyltransferase 2 from Candida glabrata (strain ATCC 2001 / BCRC 20586 / JCM 3761 / NBRC 0622 / NRRL Y-65 / CBS 138) (Yeast).